Here is a 298-residue protein sequence, read N- to C-terminus: Elongation factor Ts (298 aa).

Positions 79–82 (TDFV) are involved in Mg(2+) ion dislocation from EF-Tu.

The protein belongs to the EF-Ts family.

The protein localises to the cytoplasm. Its function is as follows. Associates with the EF-Tu.GDP complex and induces the exchange of GDP to GTP. It remains bound to the aminoacyl-tRNA.EF-Tu.GTP complex up to the GTP hydrolysis stage on the ribosome. This Cereibacter sphaeroides (strain ATCC 17025 / ATH 2.4.3) (Rhodobacter sphaeroides) protein is Elongation factor Ts.